The primary structure comprises 352 residues: UPF0324 membrane protein BCE_5279 (352 aa).

The next 10 membrane-spanning stretches (helical) occupy residues 25–47 (FGFS…LAEL), 52–71 (IMGQ…AAIG), 111–130 (VLVI…YGLT), 140–162 (GILT…APQV), 169–191 (TAVG…TLLY), 201–223 (YGVF…APGG), 230–252 (AVIV…GLWF), 267–289 (LPIP…GIIP), 291–313 (VVAG…GLGL), and 328–350 (FVAG…YALG).

This sequence belongs to the UPF0324 family.

It is found in the cell membrane. This chain is UPF0324 membrane protein BCE_5279, found in Bacillus cereus (strain ATCC 10987 / NRS 248).